The primary structure comprises 153 residues: ORM1-like protein 2 (153 aa).

Topologically, residues 1 to 21 (MNVGVAHSEVNPNTRVMSSRG) are cytoplasmic. 2 helical membrane-spanning segments follow: residues 22–42 (IWLA…SIPF) and 43–63 (FSIP…MYLL). Residues 64–105 (LHTVKGTPFETPDQGKDRLLTHWEQIDYGMQCTSSRKFLSIS) are Cytoplasmic-facing. Residues 106–126 (PVVLYLLTSFYIKYDPAHFMI) form a helical membrane-spanning segment. The Extracellular segment spans residues 127 to 153 (NTASLLSVLLPKLPQFHGVRVFGINKY).

This sequence belongs to the ORM family. As to quaternary structure, ceramide-sensitive subunit of the serine palmitoyltransferase (SPT) complex, which is also composed of SPTLC1, SPTLC2/3 and SPTSSA/B.

Its subcellular location is the endoplasmic reticulum membrane. Functionally, plays an essential role in the homeostatic regulation of sphingolipid de novo biosynthesis by modulating the activity of the serine palmitoyltransferase (SPT) in response to ceramide levels. When complexed to SPT, the binding of ceramides to its N-terminus stabilizes a conformation that block SPT substrate entry, hence preventing SPT catalytic activity. Through this mechanism, maintains ceramide levels at sufficient concentrations for the production of complex sphingolipids, but which prevents the accumulation of ceramides to levels that trigger apoptosis. The chain is ORM1-like protein 2 (ORMDL2) from Gallus gallus (Chicken).